Reading from the N-terminus, the 519-residue chain is Cytochrome P450 52A13 (519 aa).

Cys-466 lines the heme pocket.

This sequence belongs to the cytochrome P450 family. It depends on heme as a cofactor.

The protein resides in the membrane. Its function is as follows. Together with an NADPH cytochrome P450 the enzyme system catalyzes the terminal hydroxylation as the first step in the assimilation of alkanes and fatty acids. The sequence is that of Cytochrome P450 52A13 (CYP52A13) from Debaryomyces hansenii (Yeast).